A 169-amino-acid polypeptide reads, in one-letter code: Cell division inhibitor SulA (169 aa).

Polar residues predominate over residues 1–13 (MFTSAHANRSAQA). Positions 1–26 (MFTSAHANRSAQASAPAGHYAHRSGE) are disordered. Residues 106–112 (ALRTGNY) are ftsZ binding. The tract at residues 162–169 (KIHSNLYH) is lon protease binding.

The protein belongs to the SulA family. As to quaternary structure, interacts with FtsZ. In terms of processing, is rapidly cleaved and degraded by the Lon protease once DNA damage is repaired.

Its function is as follows. Component of the SOS system and an inhibitor of cell division. Accumulation of SulA causes rapid cessation of cell division and the appearance of long, non-septate filaments. In the presence of GTP, binds a polymerization-competent form of FtsZ in a 1:1 ratio, thus inhibiting FtsZ polymerization and therefore preventing it from participating in the assembly of the Z ring. This mechanism prevents the premature segregation of damaged DNA to daughter cells during cell division. The sequence is that of Cell division inhibitor SulA from Klebsiella pneumoniae subsp. pneumoniae (strain ATCC 700721 / MGH 78578).